Reading from the N-terminus, the 634-residue chain is Putative peptidoglycan O-acetyltransferase YrhL (634 aa).

The next 11 membrane-spanning stretches (helical) occupy residues 10 to 30 (YIPGLDGLRAFAVLSVITYHL), 38 to 58 (GFIGVDIFFVLSGYLITSILL), 79 to 99 (RLLPAAYLMIFSTVVWVVLFD), 110 to 130 (AISSLFYMSNWWFIFHKLSYF), 145 to 165 (LAIEEQFYIIWPMFLVVGMYI), 172 to 192 (LAAVISLLVLCSAVMMSVLYE), 244 to 264 (FLAFCILVLCVYFTDEYEPFL), 270 to 290 (LFISVTAAILIACVCHPSSFL), 307 to 327 (YGIYLWHYPVIVLSTPVQEIG), 329 to 349 (PVFWHIVLKVIVTCILAELSY), and 385 to 405 (MSIGFIIFAILIFAGGLSGLA). A disordered region spans residues 413–481 (KWTYSSQETN…SQQLKKPADT (69 aa)). The span at 414 to 429 (WTYSSQETNADTSQAS) shows a compositional bias: polar residues. 2 stretches are compositionally biased toward basic and acidic residues: residues 430–447 (GDKKNAAADKKHNPEQKT) and 455–470 (KENKDSGQETHKKKDT).

The protein belongs to the acyltransferase 3 family.

The protein resides in the cell membrane. The polypeptide is Putative peptidoglycan O-acetyltransferase YrhL (yrhL) (Bacillus subtilis (strain 168)).